Here is a 1302-residue protein sequence, read N- to C-terminus: MVAITVQGAQLIKRVVERFYPGIAFDINEGACYIYKFSDHIRRIRMKHGTKYRRQAEEIMRSISLRKERLYGIPVLDEVEWKYVFDGQTFQSYAFEVYVNSILPWSELDPEEEFLRNYRVSRETTEVEKFIEFRAKNEMQIYGDIPIKVWCCFINELSIELNPIPLGMQVMADFVNRFNSPFHQGNRDLSNLEDFQVAYTTPLLFEMCCMESILEFNIKMRMREEDISALEFGDIKIDPVGLLREFFILCLPHPKKINNVLRAPYSWFVKMWGVGADPIVVLQSTAGDDRNSKDVFYDKFRTEPNRYKALFRSSFYNESRRMNEEKILEAVKYSQNLGSHDRRLPLFEKMLKMVYTTPFYPHKSSNMILASFLLSIQTITGYGRAWVKNVSTEFDKQLKPNPSNLVRDVSDLTREFFKQAYVEAKERREEMVKPEDLYTSMLRLARNTSSGFSTEIYVKKRFGPRLRDKDLVKINSRIKALVIFTKGHTVFTDEELHKKYNSVELYQTKGSRDVPIKATRTIYSINLSVLVPQLIVTLPLNEYFSRVGGITRPDYKKIGGKVIVGDLEATGSRVMDAADCFRNSADRDIFTIAIDYSEYDTHLTRHNFRTGMLQGIREAMAPYRALRYEGYTLEQIIDFGYGEGRVANTLWNGKRRLFKTTFDAYIRLDESERDKGSFKVPKGVLPVSSVDVANRIAVDKGFDTLIAATDGSDLALIDTHLSGENSTLIANSMHNMAIGTLIQRAVGREQPGILTFLSEQYVGDDTLFYTKLHTTDITVFDKVAASIFDTVAKCGHEASPSKTMMTPYSVEKTQTHAKQGCYVPQDRMMIISSERRKDIEDVQGYVRSQVQTMITKVSRGFCHDLAQLILMLKTTFIGAWKMKRTIKENAMYRDRKFDSNDEDGFTLIQIRNPLALYVPIGWNGYGAHPAALNIVMTEEMYVDSIMISKLDEIMAPIRRIVHDIPPCWNETQGDKRGLISATKLSFFSKMARPAVQAALSDPQIMNLVEELPLGEFSPGRISRTMMHSALLKESSAKALLSSGYRLEYQKALNGWIAQVSMRLGEESGVISTSYAKLFDVYFEGELDGAPYMFPDQNLSPQFYIQKMMIGPRVSSRVRNSYVDRIDVILRKDVVMRGFITANTILNVIEKLGTNHSVGDLVTVFTLMNIETRVAEELAEYMTSEKIRFDALKLLKKGIAGDEFTMSLNVATQDFIDTYLAYPYQLTKTEVDAISLYCTQMVMLRAALGLPKKKMKIVVTDDAKKRYKIRLQRFRTHVPKIKVLKKLIDPNRMTVRNLENQFV.

The RdRp catalytic domain maps to V562 to V823.

This sequence belongs to the reoviridae RNA-directed RNA polymerase family.

The enzyme catalyses RNA(n) + a ribonucleoside 5'-triphosphate = RNA(n+1) + diphosphate. The protein is RNA-directed RNA polymerase (Segment-1) of Antilocapra americana (Pronghorn).